Here is a 262-residue protein sequence, read N- to C-terminus: Tryptophan synthase alpha chain (262 aa).

Active-site proton acceptor residues include Glu49 and Asp60.

This sequence belongs to the TrpA family. In terms of assembly, tetramer of two alpha and two beta chains.

It catalyses the reaction (1S,2R)-1-C-(indol-3-yl)glycerol 3-phosphate + L-serine = D-glyceraldehyde 3-phosphate + L-tryptophan + H2O. It functions in the pathway amino-acid biosynthesis; L-tryptophan biosynthesis; L-tryptophan from chorismate: step 5/5. The alpha subunit is responsible for the aldol cleavage of indoleglycerol phosphate to indole and glyceraldehyde 3-phosphate. This Thermoanaerobacter sp. (strain X514) protein is Tryptophan synthase alpha chain.